Here is an 863-residue protein sequence, read N- to C-terminus: Glycogen phosphorylase (863 aa).

An N6-(pyridoxal phosphate)lysine modification is found at lysine 618.

This sequence belongs to the glycogen phosphorylase family. Pyridoxal 5'-phosphate is required as a cofactor.

The enzyme catalyses [(1-&gt;4)-alpha-D-glucosyl](n) + phosphate = [(1-&gt;4)-alpha-D-glucosyl](n-1) + alpha-D-glucose 1-phosphate. Its function is as follows. Phosphorylase is an important allosteric enzyme in carbohydrate metabolism. Enzymes from different sources differ in their regulatory mechanisms and in their natural substrates. However, all known phosphorylases share catalytic and structural properties. This Mycobacterium bovis (strain ATCC BAA-935 / AF2122/97) protein is Glycogen phosphorylase (glgP).